An 862-amino-acid polypeptide reads, in one-letter code: Molybdenum cofactor sulfurase (862 aa).

Ser34 carries the phosphoserine modification. Lys264 is subject to N6-(pyridoxal phosphate)lysine. Residue Cys424 is part of the active site. At Ser517 the chain carries Phosphoserine. Residues 704-855 (RKTPKKGQPP…LSVGSEVLPV (152 aa)) enclose the MOSC domain.

This sequence belongs to the class-V pyridoxal-phosphate-dependent aminotransferase family. MOCOS subfamily. The cofactor is pyridoxal 5'-phosphate.

The catalysed reaction is Mo-molybdopterin + L-cysteine + AH2 = thio-Mo-molybdopterin + L-alanine + A + H2O. The protein operates within cofactor biosynthesis; molybdopterin biosynthesis. Sulfurates the molybdenum cofactor. Sulfation of molybdenum is essential for xanthine dehydrogenase (XDH) and aldehyde oxidase (ADO) enzymes in which molybdenum cofactor is liganded by 1 oxygen and 1 sulfur atom in active form. This Mus musculus (Mouse) protein is Molybdenum cofactor sulfurase (Mocos).